We begin with the raw amino-acid sequence, 99 residues long: MTVFVDHKIEYMSLEDDAELLKTMAHPMRLKIVNELYKHKALNVTQIIQILKLPQSTVSQHLCKMRGKVLKRNRQGLEIYYSINNPKVEGIIKLLNPIQ.

The region spanning 9-99 is the HTH arsR-type domain; sequence IEYMSLEDDA…GIIKLLNPIQ (91 aa). A DNA-binding region (H-T-H motif) is located at residues 43-62; it reads NVTQIIQILKLPQSTVSQHL.

In terms of biological role, represses the expression of the pagA and atxA genes. This is Transcriptional repressor PagR (pagR) from Bacillus anthracis.